Reading from the N-terminus, the 294-residue chain is sn-glycerol-3-phosphate transport system permease protein UgpA (294 aa).

The Cytoplasmic portion of the chain corresponds to methionine 1–serine 11. The chain crosses the membrane as a helical span at residues tryptophan 12–proline 32. Topologically, residues alanine 33–alanine 80 are periplasmic. The ABC transmembrane type-1 domain maps to phenylalanine 72–glutamine 284. The helical transmembrane segment at leucine 81 to leucine 101 threads the bilayer. Residues arginine 102–threonine 109 lie on the Cytoplasmic side of the membrane. A helical membrane pass occupies residues leucine 110–phenylalanine 130. The Periplasmic segment spans residues aspartate 131 to alanine 157. A helical membrane pass occupies residues methionine 158–leucine 178. The Cytoplasmic portion of the chain corresponds to alanine 179 to valine 207. A helical transmembrane segment spans residues leucine 208–phenylalanine 228. At aspartate 229–aspartate 262 the chain is on the periplasmic side. The chain crosses the membrane as a helical span at residues leucine 263–isoleucine 283. Residues glutamine 284 to tyrosine 294 lie on the Cytoplasmic side of the membrane.

The protein belongs to the binding-protein-dependent transport system permease family. UgpAE subfamily. In terms of assembly, the complex is composed of two ATP-binding proteins (UgpC), two transmembrane proteins (UgpA and UgpE) and a solute-binding protein (UgpB).

Its subcellular location is the cell inner membrane. Part of the ABC transporter complex UgpBAEC involved in sn-glycerol-3-phosphate (G3P) import. Probably responsible for the translocation of the substrate across the membrane. The chain is sn-glycerol-3-phosphate transport system permease protein UgpA (ugpA) from Yersinia pseudotuberculosis serotype I (strain IP32953).